The chain runs to 290 residues: Nucleotide-binding protein LAR_0375 (290 aa).

An ATP-binding site is contributed by 13–20 (GMSGAGKT). A GTP-binding site is contributed by 63-66 (DMRS).

This sequence belongs to the RapZ-like family.

In terms of biological role, displays ATPase and GTPase activities. The sequence is that of Nucleotide-binding protein LAR_0375 from Limosilactobacillus reuteri subsp. reuteri (strain JCM 1112) (Lactobacillus reuteri).